Reading from the N-terminus, the 423-residue chain is NDP-N-acetyl-D-galactosaminuronic acid dehydrogenase (423 aa).

Residue 11-28 (TISVVGLGYIGLPTATVL) participates in NAD(+) binding. The active-site Proton donor/acceptor is the lysine 218. Cysteine 272 functions as the Nucleophile in the catalytic mechanism.

The protein belongs to the UDP-glucose/GDP-mannose dehydrogenase family.

Functionally, probably involved in synthesis of sugar components of EPS I, by converting NDP-N-acetyl-D-galactosamine into NDP-N-acetyl-D-galactosaminuronic acid. This chain is NDP-N-acetyl-D-galactosaminuronic acid dehydrogenase (epsD), found in Ralstonia solanacearum (Pseudomonas solanacearum).